A 458-amino-acid polypeptide reads, in one-letter code: NADH-ubiquinone oxidoreductase chain 4 (458 aa).

13 consecutive transmembrane segments (helical) span residues 23–43, 59–79, 99–119, 148–168, 174–194, 197–217, 227–247, 260–280, 289–311, 315–337, 355–375, 396–416, and 438–458; these read LLWT…TLTL, IDQF…LTIM, LLIL…LLMF, LYFL…LIMI, SLSI…TPWS, LWWI…IFHL, PIAG…YGMI, LAVP…SICL, IAYS…TPWA, ALAM…NITY, FPLM…LPPF, ILLL…MLIM, and LMLM…AIMI.

This sequence belongs to the complex I subunit 4 family.

It localises to the mitochondrion membrane. The catalysed reaction is a ubiquinone + NADH + 5 H(+)(in) = a ubiquinol + NAD(+) + 4 H(+)(out). Its function is as follows. Core subunit of the mitochondrial membrane respiratory chain NADH dehydrogenase (Complex I) that is believed to belong to the minimal assembly required for catalysis. Complex I functions in the transfer of electrons from NADH to the respiratory chain. The immediate electron acceptor for the enzyme is believed to be ubiquinone. In Petromyzon marinus (Sea lamprey), this protein is NADH-ubiquinone oxidoreductase chain 4 (MT-ND4).